Reading from the N-terminus, the 407-residue chain is Protein phosphatase methylesterase 1 (407 aa).

Positions 1–53 are disordered; the sequence is MSDLQKSFAKSKLAKLPPEPPPIPESVADEDDDSGSSTETVTPSPVKQLFARP. Residues S185, D211, and H342 contribute to the active site. The span at 388-401 shows a compositional bias: gly residues; it reads GAGVPLGKAEGGTT. The disordered stretch occupies residues 388–407; that stretch reads GAGVPLGKAEGGTTGSFKRS.

It belongs to the AB hydrolase superfamily.

The catalysed reaction is [phosphatase 2A protein]-C-terminal L-leucine methyl ester + H2O = [phosphatase 2A protein]-C-terminal L-leucine + methanol + H(+). Demethylates proteins that have been reversibly carboxymethylated. Demethylates the phosphatase PP2A catalytic subunit. The protein is Protein phosphatase methylesterase 1 (ppe1) of Emericella nidulans (strain FGSC A4 / ATCC 38163 / CBS 112.46 / NRRL 194 / M139) (Aspergillus nidulans).